A 504-amino-acid chain; its full sequence is Maturase K (504 aa).

This sequence belongs to the intron maturase 2 family. MatK subfamily.

The protein resides in the plastid. The protein localises to the chloroplast. Functionally, usually encoded in the trnK tRNA gene intron. Probably assists in splicing its own and other chloroplast group II introns. The polypeptide is Maturase K (Taxus baccata (English yew)).